The chain runs to 876 residues: Leucine--tRNA ligase (876 aa).

The 'HIGH' region signature appears at 43–53 (PYPSGRIHMGH). A 'KMSKS' region motif is present at residues 632–636 (KMSKS). Lys-635 serves as a coordination point for ATP.

This sequence belongs to the class-I aminoacyl-tRNA synthetase family.

The protein resides in the cytoplasm. It catalyses the reaction tRNA(Leu) + L-leucine + ATP = L-leucyl-tRNA(Leu) + AMP + diphosphate. This chain is Leucine--tRNA ligase, found in Rhizobium etli (strain CIAT 652).